The following is a 95-amino-acid chain: Aspartyl/glutamyl-tRNA(Asn/Gln) amidotransferase subunit C (95 aa).

The protein belongs to the GatC family. Heterotrimer of A, B and C subunits.

The catalysed reaction is L-glutamyl-tRNA(Gln) + L-glutamine + ATP + H2O = L-glutaminyl-tRNA(Gln) + L-glutamate + ADP + phosphate + H(+). It carries out the reaction L-aspartyl-tRNA(Asn) + L-glutamine + ATP + H2O = L-asparaginyl-tRNA(Asn) + L-glutamate + ADP + phosphate + 2 H(+). Allows the formation of correctly charged Asn-tRNA(Asn) or Gln-tRNA(Gln) through the transamidation of misacylated Asp-tRNA(Asn) or Glu-tRNA(Gln) in organisms which lack either or both of asparaginyl-tRNA or glutaminyl-tRNA synthetases. The reaction takes place in the presence of glutamine and ATP through an activated phospho-Asp-tRNA(Asn) or phospho-Glu-tRNA(Gln). In Citrifermentans bemidjiense (strain ATCC BAA-1014 / DSM 16622 / JCM 12645 / Bem) (Geobacter bemidjiensis), this protein is Aspartyl/glutamyl-tRNA(Asn/Gln) amidotransferase subunit C.